The chain runs to 317 residues: MNKFKGNKVVLIGNGAVGSSYAFSLVNQSIVDELVIIDLDTEKVRGDVMDLKHATPYSPTTVRVKAGEYSDCHDADLVVICAGAAQKPGETRLDLVSKNLKIFKSIVGEVMASKFDGIFLVATNPVDILVYATWKFSGLPKERVIGSGTILDSARFRLLLSEAFDVAPRSVDAQIIGEHGDTELPVWSHANIAGQPLKTLLEQRPEGKAQIEQIFVQTRDAAYDIIQAKGATYYGVAMGLARITEAIFRNEDAVLTVSALLEGEYDEEDVYIGVPAVINRNGIRNVVEIPLNDEEQSKFAHSAKTLKDIMAEAEELK.

NAD(+) is bound by residues V17, D38, K43, Y69, and 83–84 (GA). Substrate contacts are provided by Q86 and R92. NAD(+)-binding positions include S105, 122 to 124 (ATN), and S147. 124–127 (NPVD) is a substrate binding site. 152-155 (DSAR) serves as a coordination point for substrate. Residue H179 is the Proton acceptor of the active site. Residue Y223 is modified to Phosphotyrosine. Residue T232 coordinates substrate.

It belongs to the LDH/MDH superfamily. LDH family. In terms of assembly, homotetramer.

The protein localises to the cytoplasm. It catalyses the reaction (S)-lactate + NAD(+) = pyruvate + NADH + H(+). It participates in fermentation; pyruvate fermentation to lactate; (S)-lactate from pyruvate: step 1/1. In terms of biological role, catalyzes the conversion of lactate to pyruvate (Potential). Appears to be the primary factor that allows S.aureus growth during nitrosative stress in both aerobically and anaerobically cultured cells. The sequence is that of L-lactate dehydrogenase 1 from Staphylococcus aureus (strain bovine RF122 / ET3-1).